The following is a 244-amino-acid chain: NAD-dependent protein deacylase SIR2rp3 (244 aa).

In terms of domain architecture, Deacetylase sirtuin-type spans 1–239; that stretch reads MRRPNGMIAI…PAWADEVLHG (239 aa). Residue 13 to 32 coordinates NAD(+); the sequence is GAGISAESGISTFRDQNGLW. Tyr57 and Arg60 together coordinate substrate. Residue 95 to 98 participates in NAD(+) binding; sequence QNID. Catalysis depends on His113, which acts as the Proton acceptor. Residues Cys121 and Cys141 each contribute to the Zn(2+) site. Residues 181–183 and Ala225 contribute to the NAD(+) site; that span reads GTS.

It belongs to the sirtuin family. Class III subfamily. Zn(2+) is required as a cofactor.

It localises to the mitochondrion. It carries out the reaction N(6)-malonyl-L-lysyl-[protein] + NAD(+) + H2O = 2''-O-malonyl-ADP-D-ribose + nicotinamide + L-lysyl-[protein]. It catalyses the reaction N(6)-succinyl-L-lysyl-[protein] + NAD(+) + H2O = 2''-O-succinyl-ADP-D-ribose + nicotinamide + L-lysyl-[protein]. The catalysed reaction is N(6)-glutaryl-L-lysyl-[protein] + NAD(+) + H2O = 2''-O-glutaryl-ADP-D-ribose + nicotinamide + L-lysyl-[protein]. Functionally, NAD-dependent lysine demalonylase, desuccinylase and deglutarylase that specifically removes malonyl, succinyl and glutaryl groups on target proteins. Has weak NAD-dependent protein deacetylase activity; however this activity may not be physiologically relevant in vivo. The protein is NAD-dependent protein deacylase SIR2rp3 (SIR2rp3) of Trypanosoma brucei brucei (strain 927/4 GUTat10.1).